The primary structure comprises 991 residues: Integrator complex subunit 8 (991 aa).

A compositionally biased stretch (basic and acidic residues) spans 1-10; that stretch reads MSAEAADREA. The segment at 1-22 is disordered; that stretch reads MSAEAADREAATSSRPCTPPQT. Residues 11 to 22 show a composition bias toward polar residues; that stretch reads ATSSRPCTPPQT. The WFEF motif motif lies at 24–29; the sequence is WFEFLL. TPR repeat units follow at residues 250–288, 319–355, 569–602, and 829–862; these read CQGC…VSKI, SQPA…SLPD, VYIL…VTEF, and HSWL…CSDF.

It belongs to the Integrator subunit 8 family. As to quaternary structure, component of the Integrator complex, composed of core subunits INTS1, INTS2, INTS3, INTS4, INTS5, INTS6, INTS7, INTS8, INTS9/RC74, INTS10, INTS11/CPSF3L, INTS12, INTS13, INTS14 and INTS15. The core complex associates with protein phosphatase 2A subunits PPP2CA and PPP2R1A, to form the Integrator-PP2A (INTAC) complex.

It is found in the nucleus. The protein resides in the chromosome. Component of the integrator complex, a multiprotein complex that terminates RNA polymerase II (Pol II) transcription in the promoter-proximal region of genes. The integrator complex provides a quality checkpoint during transcription elongation by driving premature transcription termination of transcripts that are unfavorably configured for transcriptional elongation: the complex terminates transcription by (1) catalyzing dephosphorylation of the C-terminal domain (CTD) of Pol II subunit POLR2A/RPB1 and SUPT5H/SPT5, (2) degrading the exiting nascent RNA transcript via endonuclease activity and (3) promoting the release of Pol II from bound DNA. The integrator complex is also involved in terminating the synthesis of non-coding Pol II transcripts, such as enhancer RNAs (eRNAs), small nuclear RNAs (snRNAs), telomerase RNAs and long non-coding RNAs (lncRNAs). Within the integrator complex, INTS8 is required for the recruitment of protein phosphatase 2A (PP2A) to transcription pause-release checkpoint. The protein is Integrator complex subunit 8 (ints8) of Xenopus laevis (African clawed frog).